Here is a 353-residue protein sequence, read N- to C-terminus: L-tryptophan dehydrogenase (353 aa).

Arginine 44 contacts NAD(+). The active-site Proton donor/acceptor is lysine 80. NAD(+) is bound by residues aspartate 114, threonine 146, 176 to 181 (GLGNVG), lysine 204, and 255 to 257 (AAN).

It belongs to the Glu/Leu/Phe/Val dehydrogenases family. Homodimer.

It catalyses the reaction L-tryptophan + NAD(+) + H2O = indole-3-pyruvate + NH4(+) + NADH + H(+). Its function is as follows. Catalyzes the reversible oxidative deamination of L-tryptophan to indole-3-pyruvate in the presence of NAD(+). Cannot use other L-amino acids and D-Trp. Involved in the biosynthesis of scytonemin, a cyanobacterial radiation-absorbing pigment. The chain is L-tryptophan dehydrogenase from Nostoc punctiforme (strain ATCC 29133 / PCC 73102).